The following is a 410-amino-acid chain: Cysteine desulfurase IscS (410 aa).

Residues 80-81 (AT), Asn-160, Gln-188, and 208-210 (SGH) each bind pyridoxal 5'-phosphate. An N6-(pyridoxal phosphate)lysine modification is found at Lys-211. Thr-248 contacts pyridoxal 5'-phosphate. Cys-334 acts as the Cysteine persulfide intermediate in catalysis. Cys-334 lines the [2Fe-2S] cluster pocket.

It belongs to the class-V pyridoxal-phosphate-dependent aminotransferase family. NifS/IscS subfamily. In terms of assembly, homodimer. Forms a heterotetramer with IscU, interacts with other sulfur acceptors. It depends on pyridoxal 5'-phosphate as a cofactor.

Its subcellular location is the cytoplasm. It catalyses the reaction (sulfur carrier)-H + L-cysteine = (sulfur carrier)-SH + L-alanine. It participates in cofactor biosynthesis; iron-sulfur cluster biosynthesis. Functionally, master enzyme that delivers sulfur to a number of partners involved in Fe-S cluster assembly, tRNA modification or cofactor biosynthesis. Catalyzes the removal of elemental sulfur atoms from cysteine to produce alanine. Functions as a sulfur delivery protein for Fe-S cluster synthesis onto IscU, an Fe-S scaffold assembly protein, as well as other S acceptor proteins. The sequence is that of Cysteine desulfurase IscS from Rickettsia felis (strain ATCC VR-1525 / URRWXCal2) (Rickettsia azadi).